The sequence spans 247 residues: Carboxy-S-adenosyl-L-methionine synthase (247 aa).

S-adenosyl-L-methionine is bound by residues Y39, 64 to 66, 89 to 90, 117 to 118, N132, and R199; these read GCS, DN, and DI.

This sequence belongs to the class I-like SAM-binding methyltransferase superfamily. Cx-SAM synthase family. In terms of assembly, homodimer.

The enzyme catalyses prephenate + S-adenosyl-L-methionine = carboxy-S-adenosyl-L-methionine + 3-phenylpyruvate + H2O. In terms of biological role, catalyzes the conversion of S-adenosyl-L-methionine (SAM) to carboxy-S-adenosyl-L-methionine (Cx-SAM). This chain is Carboxy-S-adenosyl-L-methionine synthase, found in Escherichia coli O139:H28 (strain E24377A / ETEC).